Here is an 80-residue protein sequence, read N- to C-terminus: Putative membrane protein insertion efficiency factor (80 aa).

Positions 61–80 (KTGKDPVPDHFSLKRNQEGE) are disordered. The span at 62 to 80 (TGKDPVPDHFSLKRNQEGE) shows a compositional bias: basic and acidic residues.

Belongs to the UPF0161 family.

It localises to the cell membrane. Its function is as follows. Could be involved in insertion of integral membrane proteins into the membrane. In Streptococcus pneumoniae serotype 19F (strain G54), this protein is Putative membrane protein insertion efficiency factor.